Consider the following 862-residue polypeptide: Taxadiene synthase (862 aa).

Residues Asp613, Asp617, Asn757, Thr761, and Glu765 each coordinate Mg(2+). Positions 613-617 (DDMAD) match the DDXXD motif motif.

Belongs to the terpene synthase family. Requires Mg(2+) as cofactor.

The enzyme catalyses (2E,6E,10E)-geranylgeranyl diphosphate = taxa-4(5),11(12)-diene + diphosphate. It participates in alkaloid biosynthesis; taxol biosynthesis; taxa-4(20),11-dien-5alpha-ol from geranylgeranyl diphosphate: step 1/2. Its function is as follows. Catalyzes the cyclization of the ubiquitous isoprenoid intermediate geranylgeranyl diphosphate to taxa-4,11-diene, the parent olefin with a taxane skeleton. The sequence is that of Taxadiene synthase (TDC1) from Taxus baccata (English yew).